A 184-amino-acid polypeptide reads, in one-letter code: Photosystem I assembly protein Ycf4 (184 aa).

Transmembrane regions (helical) follow at residues 22–42 and 57–77; these read FCWA…GTSS and ILFF…LFIS.

The protein belongs to the Ycf4 family.

It is found in the plastid. It localises to the chloroplast thylakoid membrane. Functionally, seems to be required for the assembly of the photosystem I complex. The protein is Photosystem I assembly protein Ycf4 of Panax ginseng (Korean ginseng).